A 355-amino-acid chain; its full sequence is F-box only protein 32 (355 aa).

Residues 62 to 67 (KKRKKD) carry the Nuclear localization signal motif. The Nuclear export signal motif lies at 169–173 (LLQTL). An F-box domain is found at 223-271 (LTFTDLPLCLQLNIMQRLSDGRDLVSLGQVAPDLHVLSEDRLLWKKLCQ). Residues 280-295 (RKRLILSDKGQLDWKK) carry the Bipartite nuclear localization signal motif.

As to quaternary structure, part of the SCF (SKP1-CUL1-F-box) E3 ubiquitin-protein ligase complex SCF(FBXO32) formed of CUL1, SKP1, RBX1 and FBXO32.

Its subcellular location is the cytoplasm. The protein resides in the nucleus. It participates in protein modification; protein ubiquitination. Functionally, substrate recognition component of a SCF (SKP1-CUL1-F-box protein) E3 ubiquitin-protein ligase complex which mediates the ubiquitination and subsequent proteasomal degradation of target proteins. Probably recognizes and binds to phosphorylated target proteins during skeletal muscle atrophy. Recognizes TERF1. This chain is F-box only protein 32 (FBXO32), found in Sus scrofa (Pig).